A 163-amino-acid chain; its full sequence is NAD(P)H-quinone oxidoreductase subunit I, chloroplastic (163 aa).

4Fe-4S ferredoxin-type domains follow at residues 55–84 (GRIHFEFDKCIACEVCVRVCPIDLPVVDWR) and 95–124 (LNYSIDFGVCIFCGNCVEYCPTNCLSMTEE). The [4Fe-4S] cluster site is built by Cys64, Cys67, Cys70, Cys74, Cys104, Cys107, Cys110, and Cys114.

Belongs to the complex I 23 kDa subunit family. As to quaternary structure, NDH is composed of at least 16 different subunits, 5 of which are encoded in the nucleus. The cofactor is [4Fe-4S] cluster.

It localises to the plastid. Its subcellular location is the chloroplast thylakoid membrane. It carries out the reaction a plastoquinone + NADH + (n+1) H(+)(in) = a plastoquinol + NAD(+) + n H(+)(out). The enzyme catalyses a plastoquinone + NADPH + (n+1) H(+)(in) = a plastoquinol + NADP(+) + n H(+)(out). NDH shuttles electrons from NAD(P)H:plastoquinone, via FMN and iron-sulfur (Fe-S) centers, to quinones in the photosynthetic chain and possibly in a chloroplast respiratory chain. The immediate electron acceptor for the enzyme in this species is believed to be plastoquinone. Couples the redox reaction to proton translocation, and thus conserves the redox energy in a proton gradient. In Phoenix dactylifera (Date palm), this protein is NAD(P)H-quinone oxidoreductase subunit I, chloroplastic (ndhI).